A 122-amino-acid polypeptide reads, in one-letter code: Small ribosomal subunit protein uS13 (122 aa).

Residues 99–122 (RGQRTHTNARTRKGPAKAIAGKKK) are disordered.

Belongs to the universal ribosomal protein uS13 family. Part of the 30S ribosomal subunit. Forms a loose heterodimer with protein S19. Forms two bridges to the 50S subunit in the 70S ribosome.

Its function is as follows. Located at the top of the head of the 30S subunit, it contacts several helices of the 16S rRNA. In the 70S ribosome it contacts the 23S rRNA (bridge B1a) and protein L5 of the 50S subunit (bridge B1b), connecting the 2 subunits; these bridges are implicated in subunit movement. Contacts the tRNAs in the A and P-sites. In Rhodopseudomonas palustris (strain HaA2), this protein is Small ribosomal subunit protein uS13.